We begin with the raw amino-acid sequence, 331 residues long: Coiled-coil domain-containing protein 92 (331 aa).

Coiled coils occupy residues 18–44 (MAAT…HAST) and 76–152 (DGTS…EQRA). Residues 171-184 (SSSGTSDASPSGSP) are compositionally biased toward low complexity. The tract at residues 171 to 212 (SSSGTSDASPSGSPVLASYKPAPPKDKLPETPRRRMKKSLSA) is disordered. The span at 193–203 (PPKDKLPETPR) shows a compositional bias: basic and acidic residues. Residue S209 is modified to Phosphoserine.

As to quaternary structure, interacts with CEP164. (Microbial infection) Interacts with ebolavirus protein NP; this interaction sequesters NP in the cytoplasm. In terms of processing, phosphorylated at Ser-209 by TTBK2.

Its subcellular location is the cytoplasm. The protein localises to the cytoskeleton. The protein resides in the microtubule organizing center. It localises to the centrosome. It is found in the centriole. Interferon-stimulated protein that plays a role in innate immunity. Strongly inhibits ebolavirus transcription and replication. Forms a complex with viral RNA-bound nucleocapsid NP and thereby prevents the transport of NP to the cell surface. This is Coiled-coil domain-containing protein 92 (CCDC92) from Homo sapiens (Human).